The sequence spans 192 residues: uncharacterized protein (192 aa).

This is an uncharacterized protein from Sinorhizobium fredii (strain NBRC 101917 / NGR234).